A 1844-amino-acid polypeptide reads, in one-letter code: ATPase family AAA domain-containing protein 5 (1844 aa).

A Phosphoserine modification is found at Ser-44. Lys-127 participates in a covalent cross-link: Glycyl lysine isopeptide (Lys-Gly) (interchain with G-Cter in SUMO2). The segment covering 178–199 (QPNTMTSLQNSKKVNPKQGTTK) has biased composition (polar residues). The tract at residues 178–204 (QPNTMTSLQNSKKVNPKQGTTKNDFKK) is disordered. 5 positions are modified to phosphoserine: Ser-219, Ser-306, Ser-311, Ser-354, and Ser-369. The interaction with WDR48 stretch occupies residues 368 to 384 (KSNVVIQEEELELAVLE). Disordered regions lie at residues 477–499 (KLKK…REGN), 580–623 (ESEA…NSQL), and 658–700 (KFTR…SKNI). Composition is skewed to polar residues over residues 580–592 (ESEA…STPK) and 599–608 (RISSTPTTET). 3 positions are modified to phosphoserine: Ser-602, Ser-614, and Ser-621. Residues 664–673 (TPKKSKKKSN) show a composition bias toward basic residues. A compositionally biased stretch (polar residues) spans 685 to 700 (GFTSQIRKASNTSKNI). At Ser-817 the chain carries Phosphoserine. 2 stretches are compositionally biased toward basic and acidic residues: residues 987–1032 (LEAD…ELSK) and 1092–1106 (RQNL…HEDF). Disordered stretches follow at residues 987–1047 (LEAD…SKDS) and 1092–1118 (RQNL…SSDD). At Ser-1116 the chain carries Phosphoserine. ATP is bound at residue 1132-1139 (GPTGVGKT). 2 disordered regions span residues 1203–1235 (KKIS…LPPK) and 1272–1292 (ITQT…GAEE). Polar residues predominate over residues 1272 to 1285 (ITQTKSTNATNSNV). The short motif at 1428-1432 (LVCSE) is the LXCXE motif element. Residues 1591–1635 (SLSSVSSSSNAEESKTGDEESKARDKGNNPETKKSIPCPPKTTAG) form a disordered region. A compositionally biased stretch (basic and acidic residues) spans 1602-1624 (EESKTGDEESKARDKGNNPETKK). An interaction with RAD51 and RFC5 region spans residues 1630 to 1719 (PKTTAGKKCS…AAAEALSFTK (90 aa)).

Belongs to the AAA ATPase family. In terms of assembly, component of a heteropentameric replication factor ATAD5 RFC-like complex composed of one large subunit (ATAD5) and four small subunits (RFC2, RFC3, RFC4 and RFC5). Within the ATAD5 RFC-like complex, interacts with RFC2, RFC4 and RFC5. Within the ATAD5 RFC-like complex, interacts directly via-N terminal with RAD51; the interactions is enhanced under replication stress. Interacts with RB1 predominantly in G1 phase via its LXCXE motif. Interacts with RAD9A in growing cells. The interaction with RAD9A is reduced after exposure to DNA replication-inhibiting agents. Interacts with BRD4. Interacts with PCNA. Interacts with deubiquitinating enzyme USP1, and its associated factor, WDR48. Post-translationally, ATR may stimulate the RAD9A dissociation.

It localises to the nucleus. Has an important role in DNA replication and in maintaining genome integrity during replication stress. Involved in a RAD9A-related damage checkpoint, a pathway that is important in determining whether DNA damage is compatible with cell survival or whether it requires cell elimination by apoptosis. Modulates the RAD9A interaction with BCL2 and thereby induces DNA damage-induced apoptosis. Promotes PCNA deubiquitination by recruiting the ubiquitin-specific protease 1 (USP1) and WDR48 thereby down-regulating the error-prone damage bypass pathway. As component of the ATAD5 RFC-like complex, regulates the function of the DNA polymerase processivity factor PCNA by unloading the ring-shaped PCNA homotrimer from DNA after replication during the S phase of the cell cycle. This seems to be dependent on its ATPase activity. Plays important roles in restarting stalled replication forks under replication stress, by unloading the PCNA homotrimer from DNA and recruiting RAD51 possibly through an ATR-dependent manner. Ultimately this enables replication fork regression, breakage, and eventual fork restart. Both the PCNA unloading activity and the interaction with WDR48 are required to efficiently recruit RAD51 to stalled replication forks. Promotes the generation of MUS81-mediated single-stranded DNA-associated breaks in response to replication stress, which is an alternative pathway to restart stalled/regressed replication forks. This chain is ATPase family AAA domain-containing protein 5, found in Homo sapiens (Human).